The following is a 121-amino-acid chain: Basic phospholipase A2 BmTX-I (121 aa).

7 disulfide bridges follow: cysteine 26/cysteine 114, cysteine 28/cysteine 45, cysteine 44/cysteine 95, cysteine 50/cysteine 121, cysteine 51/cysteine 88, cysteine 58/cysteine 82, and cysteine 76/cysteine 86. Residues tyrosine 27, glycine 29, and glycine 31 each contribute to the Ca(2+) site. The active site involves histidine 48. Aspartate 49 is a Ca(2+) binding site. Aspartate 89 is an active-site residue.

It depends on Ca(2+) as a cofactor. As to expression, expressed by the venom gland.

The protein resides in the secreted. It catalyses the reaction a 1,2-diacyl-sn-glycero-3-phosphocholine + H2O = a 1-acyl-sn-glycero-3-phosphocholine + a fatty acid + H(+). With respect to regulation, inhibited by magnesium, cadmium and manganese ions. Also inhibited by crotapotin. Snake venom phospholipase A2 (PLA2) that shows enzymatic activity in the presence of a synthetic substrate. In vitro, blocks the neuromuscular transmission in young chick biventer cervicis preparations. In mice, induces myonecrosis and a systemic interleukin-6 response upon intramuscular injection. Also induces edema and exerts a strong pro-inflammatory effect. PLA2 catalyzes the calcium-dependent hydrolysis of the 2-acyl groups in 3-sn-phosphoglycerides. The polypeptide is Basic phospholipase A2 BmTX-I (Bothrops moojeni (Lance-headed viper)).